The following is a 106-amino-acid chain: Cell division protein FtsB (106 aa).

Residues 1–3 lie on the Cytoplasmic side of the membrane; the sequence is MGK. Residues 4-21 form a helical membrane-spanning segment; the sequence is LTLLLLVLLGWLQYSLWL. Topologically, residues 22–106 are periplasmic; that stretch reads GKNGIHDFVR…GTPSTQNNAQ (85 aa). Residues 31-62 are a coiled coil; that stretch reads RVKEDVAAQEANNSTLKARNDQLFAEIDDLNG.

This sequence belongs to the FtsB family. As to quaternary structure, part of a complex composed of FtsB, FtsL and FtsQ.

The protein resides in the cell inner membrane. In terms of biological role, essential cell division protein. May link together the upstream cell division proteins, which are predominantly cytoplasmic, with the downstream cell division proteins, which are predominantly periplasmic. This is Cell division protein FtsB from Yersinia pseudotuberculosis serotype O:1b (strain IP 31758).